Reading from the N-terminus, the 336-residue chain is NADH-quinone oxidoreductase subunit H (336 aa).

Helical transmembrane passes span 12–32 (FLKI…LTWF), 84–104 (VVMA…GPGF), 118–138 (VNIA…GTIF), 156–176 (AAVV…VILL), 193–213 (GVWF…CMLA), 247–267 (LAEW…LFFG), 274–294 (IFGP…LVFF), and 313–333 (IAWK…AVVV).

Belongs to the complex I subunit 1 family. NDH-1 is composed of 14 different subunits. Subunits NuoA, H, J, K, L, M, N constitute the membrane sector of the complex.

The protein resides in the cell inner membrane. It catalyses the reaction a quinone + NADH + 5 H(+)(in) = a quinol + NAD(+) + 4 H(+)(out). Functionally, NDH-1 shuttles electrons from NADH, via FMN and iron-sulfur (Fe-S) centers, to quinones in the respiratory chain. The immediate electron acceptor for the enzyme in this species is believed to be ubiquinone. Couples the redox reaction to proton translocation (for every two electrons transferred, four hydrogen ions are translocated across the cytoplasmic membrane), and thus conserves the redox energy in a proton gradient. This subunit may bind ubiquinone. This is NADH-quinone oxidoreductase subunit H from Aquifex aeolicus (strain VF5).